The chain runs to 372 residues: Transaldolase 2 (372 aa).

Lys-140 serves as the catalytic Schiff-base intermediate with substrate.

It belongs to the transaldolase family. Type 2 subfamily.

The protein localises to the cytoplasm. It carries out the reaction D-sedoheptulose 7-phosphate + D-glyceraldehyde 3-phosphate = D-erythrose 4-phosphate + beta-D-fructose 6-phosphate. It functions in the pathway carbohydrate degradation; pentose phosphate pathway; D-glyceraldehyde 3-phosphate and beta-D-fructose 6-phosphate from D-ribose 5-phosphate and D-xylulose 5-phosphate (non-oxidative stage): step 2/3. Transaldolase is important for the balance of metabolites in the pentose-phosphate pathway. The protein is Transaldolase 2 of Streptomyces avermitilis (strain ATCC 31267 / DSM 46492 / JCM 5070 / NBRC 14893 / NCIMB 12804 / NRRL 8165 / MA-4680).